The chain runs to 179 residues: Large ribosomal subunit protein uL5 (179 aa).

It belongs to the universal ribosomal protein uL5 family. As to quaternary structure, part of the 50S ribosomal subunit; part of the 5S rRNA/L5/L18/L25 subcomplex. Contacts the 5S rRNA and the P site tRNA. Forms a bridge to the 30S subunit in the 70S ribosome.

In terms of biological role, this is one of the proteins that bind and probably mediate the attachment of the 5S RNA into the large ribosomal subunit, where it forms part of the central protuberance. In the 70S ribosome it contacts protein S13 of the 30S subunit (bridge B1b), connecting the 2 subunits; this bridge is implicated in subunit movement. Contacts the P site tRNA; the 5S rRNA and some of its associated proteins might help stabilize positioning of ribosome-bound tRNAs. The chain is Large ribosomal subunit protein uL5 from Burkholderia ambifaria (strain MC40-6).